A 668-amino-acid polypeptide reads, in one-letter code: UvrABC system protein B (668 aa).

The Helicase ATP-binding domain maps to 31-188 (HGIEAGEKAQ…RKLVNIQFER (158 aa)). ATP is bound at residue 44–51 (GATGTGKT). The short motif at 97–120 (YYDYYQPEAYVPSSDTYIEKDSSI) is the Beta-hairpin element. The Helicase C-terminal domain occupies 435-601 (QMDDLVGEIN…TIIKPIRDLI (167 aa)). Residues 630-665 (EKLIARLEDEMRAAAKKLDFEQAASLRDTIMDMKTE) form the UVR domain.

The protein belongs to the UvrB family. In terms of assembly, forms a heterotetramer with UvrA during the search for lesions. Interacts with UvrC in an incision complex.

Its subcellular location is the cytoplasm. In terms of biological role, the UvrABC repair system catalyzes the recognition and processing of DNA lesions. A damage recognition complex composed of 2 UvrA and 2 UvrB subunits scans DNA for abnormalities. Upon binding of the UvrA(2)B(2) complex to a putative damaged site, the DNA wraps around one UvrB monomer. DNA wrap is dependent on ATP binding by UvrB and probably causes local melting of the DNA helix, facilitating insertion of UvrB beta-hairpin between the DNA strands. Then UvrB probes one DNA strand for the presence of a lesion. If a lesion is found the UvrA subunits dissociate and the UvrB-DNA preincision complex is formed. This complex is subsequently bound by UvrC and the second UvrB is released. If no lesion is found, the DNA wraps around the other UvrB subunit that will check the other stand for damage. The protein is UvrABC system protein B of Levilactobacillus brevis (strain ATCC 367 / BCRC 12310 / CIP 105137 / JCM 1170 / LMG 11437 / NCIMB 947 / NCTC 947) (Lactobacillus brevis).